The chain runs to 98 residues: Aspartyl/glutamyl-tRNA(Asn/Gln) amidotransferase subunit C (98 aa).

The protein belongs to the GatC family. In terms of assembly, heterotrimer of A, B and C subunits.

The catalysed reaction is L-glutamyl-tRNA(Gln) + L-glutamine + ATP + H2O = L-glutaminyl-tRNA(Gln) + L-glutamate + ADP + phosphate + H(+). It carries out the reaction L-aspartyl-tRNA(Asn) + L-glutamine + ATP + H2O = L-asparaginyl-tRNA(Asn) + L-glutamate + ADP + phosphate + 2 H(+). In terms of biological role, allows the formation of correctly charged Asn-tRNA(Asn) or Gln-tRNA(Gln) through the transamidation of misacylated Asp-tRNA(Asn) or Glu-tRNA(Gln) in organisms which lack either or both of asparaginyl-tRNA or glutaminyl-tRNA synthetases. The reaction takes place in the presence of glutamine and ATP through an activated phospho-Asp-tRNA(Asn) or phospho-Glu-tRNA(Gln). In Paenarthrobacter aurescens (strain TC1), this protein is Aspartyl/glutamyl-tRNA(Asn/Gln) amidotransferase subunit C.